A 239-amino-acid polypeptide reads, in one-letter code: Probable 2-phosphosulfolactate phosphatase (239 aa).

Belongs to the ComB family. Requires Mg(2+) as cofactor.

It catalyses the reaction (2R)-O-phospho-3-sulfolactate + H2O = (2R)-3-sulfolactate + phosphate. The protein is Probable 2-phosphosulfolactate phosphatase of Clostridium botulinum (strain Loch Maree / Type A3).